Consider the following 382-residue polypeptide: (R,R)-butanediol dehydrogenase (382 aa).

A Zn(2+)-binding site is contributed by Cys39. Ser63 bears the Phosphoserine mark. Zn(2+) is bound by residues His73, Cys103, Cys120, Cys123, Cys131, and Glu173.

The protein belongs to the zinc-containing alcohol dehydrogenase family. As to quaternary structure, homodimer. Requires Zn(2+) as cofactor.

Its subcellular location is the cytoplasm. The enzyme catalyses (R,R)-butane-2,3-diol + NAD(+) = (R)-acetoin + NADH + H(+). NAD-dependent (R,R)-butanediol dehydrogenase which catalyzes oxidation of (R,R)-butane-2,3-diol to (3R)-acetoin, of meso-butanediol to (3S)-acetoin, and reduction of acetoin. Allows the use of 2,3-butanediol as an aerobic carbon source. The sequence is that of (R,R)-butanediol dehydrogenase (BDH1) from Saccharomyces cerevisiae (strain ATCC 204508 / S288c) (Baker's yeast).